Here is a 279-residue protein sequence, read N- to C-terminus: 32 kDa beta-galactoside-binding lectin (279 aa).

Galectin domains follow at residues 13–144 and 152–279; these read YRSV…VHWG and YESG…IQIQ. An a beta-D-galactoside-binding site is contributed by 213 to 219; sequence WGNEERE.

The N-terminus is blocked.

Its function is as follows. Binds galactose. The chain is 32 kDa beta-galactoside-binding lectin (lec-1) from Caenorhabditis elegans.